The sequence spans 331 residues: MSSGRTVTLNTGYKIPQIGYGTWQAAPGEVGAGVFEALKVGYRHLDLAKVYGNQKEVGEGIKKALAEVPGLKREDIFITSKLWNNSHKPEDVEPALDDTLAELGLDYLDLYLIHWPVAFAPGADLFPKSEDGSEVQLNQNVSIVQTWKAMTELPKSKVRSVGVSNFTIEHLDAVIEATGVVPAVNQIERHPRLPNQPLIDYCAKKGIIITAYSAFGNNTKGLPLLVSSDEVKAVADNLSKKQGKTVTPAQVILAWSQIGGHTVIPKSVTKARIAENFQEVELDDEAIAALNKLGEKPQRFNIPYTYKPRWNINLFNTEEEKAAAHTAVIKL.

Tyr51 acts as the Proton donor in catalysis. His114 contributes to the substrate binding site. Position 213-276 (213-276) interacts with NADP(+); that stretch reads SAFGNNTKGL…SVTKARIAEN (64 aa).

This sequence belongs to the aldo/keto reductase family.

The catalysed reaction is glycerol + NADP(+) = L-glyceraldehyde + NADPH + H(+). The enzyme catalyses glycerol + NADP(+) = D-glyceraldehyde + NADPH + H(+). It participates in carbohydrate acid metabolism. In terms of biological role, mediates the conversion of L-glyceraldehyde to glycerol in D-galacturonate catabolic process. Also able to reduce D-glyceraldehyde. In Hypocrea jecorina (Trichoderma reesei), this protein is D/L-glyceraldehyde reductase (gld1).